Consider the following 492-residue polypeptide: MAPVGVEKKLLLGPNGPAVAAAGDLTSEEEEGQSLWSSILSEVSTRAGSKLPSGKNILVFGEDGSGKTTLMTKLQGAEHGKKGRGLEYLYLSVHDEDRDDHTRCNVWILDGDLYHKGLLKFAVSAESLPETLVIFVADMSRPWTVMESLQKWASVLREHIDKMKIPPEKMRELERKFVKDFQDYMEPEEGCQGSPQRRGPLTSGSDEENVALPLGDNVLTHNLGIPVLVVCTKCDAVSVLEKEHDYRDEHLDFIQSHLRRFCLQYGAALIYTSVKEEKNLDLLYKYIVHKTYGFHFTTPALVVEKDAVFIPAGWDNEKKIAILHENFTTVKPEDAYEDFIVKPPVRKLVHDKELAAEDEQVFLMKQQSLLAKQPATPTRASESPARGPSGSPRTQGRGGPASVPSSFPGTSVKKPDPNIKNNAASEGVLASFFNSLLSKKTGSPGSPGAGGVQSTAKKSGQKTVLSNVQEELDRMTRKPDSMVTNSSTENEA.

61–68 (GEDGSGKT) contributes to the ATP binding site. 3 disordered regions span residues 187–206 (PEEG…SGSD), 371–423 (AKQP…KNNA), and 437–492 (LSKK…ENEA). Ser-194 bears the Phosphoserine mark. The span at 371–381 (AKQPATPTRAS) shows a compositional bias: polar residues. Phosphoserine occurs at positions 383 and 391. Arg-397 carries the omega-N-methylarginine modification. Thr-441 carries the phosphothreonine modification. Phosphoserine occurs at positions 443 and 446. Residues 452–469 (VQSTAKKSGQKTVLSNVQ) show a composition bias toward polar residues. Residues 471–480 (ELDRMTRKPD) show a composition bias toward basic and acidic residues. A compositionally biased stretch (polar residues) spans 482–492 (MVTNSSTENEA).

The protein belongs to the dynein light intermediate chain family. Homodimer. The cytoplasmic dynein 1 complex consists of two catalytic heavy chains (HCs) and a number of non-catalytic subunits presented by intermediate chains (ICs), light intermediate chains (LICs) and light chains (LCs); the composition seems to vary in respect to the IC, LIC and LC composition. The heavy chain homodimer serves as a scaffold for the probable homodimeric assembly of the respective non-catalytic subunits. The ICs and LICs bind directly to the HC dimer and the LCs assemble on the IC dimer. Interacts with DYNC1H1; DYNC1LI1 and DYNC1LI2 bind mutually exclusive to DYNC1H.

It is found in the cytoplasm. It localises to the cytoskeleton. Its function is as follows. Acts as one of several non-catalytic accessory components of the cytoplasmic dynein 1 complex that are thought to be involved in linking dynein to cargos and to adapter proteins that regulate dynein function. Cytoplasmic dynein 1 acts as a motor for the intracellular retrograde motility of vesicles and organelles along microtubules. May play a role in binding dynein to membranous organelles or chromosomes. This Pongo abelii (Sumatran orangutan) protein is Cytoplasmic dynein 1 light intermediate chain 2 (DYNC1LI2).